The chain runs to 829 residues: Periplasmic nitrate reductase (829 aa).

The tat-type signal signal peptide spans 1-30 (MKMTRRAFVKANAAASAAAVAGITLPASAA). Residues 41 to 97 (ITWDKAPCRFCGTGCSVLVGTQNGKVVATQGDPEAPVNKGLNCIKGYFLSKIMYGQD) enclose the 4Fe-4S Mo/W bis-MGD-type domain. Cysteine 48, cysteine 51, cysteine 55, and cysteine 83 together coordinate [4Fe-4S] cluster. Mo-bis(molybdopterin guanine dinucleotide) contacts are provided by residues lysine 85, glutamine 152, asparagine 177, cysteine 181, 214-221 (WGSNMAEM), 245-249 (STYYH), 264-266 (QSD), methionine 374, glutamine 378, asparagine 484, 510-511 (SD), lysine 533, aspartate 560, and 718-727 (TGRVLEHWHT). Phenylalanine 794 contacts substrate. Residues asparagine 802 and lysine 819 each contribute to the Mo-bis(molybdopterin guanine dinucleotide) site.

Belongs to the prokaryotic molybdopterin-containing oxidoreductase family. NasA/NapA/NarB subfamily. In terms of assembly, component of the periplasmic nitrate reductase NapAB complex composed of NapA and NapB. It depends on [4Fe-4S] cluster as a cofactor. Requires Mo-bis(molybdopterin guanine dinucleotide) as cofactor. In terms of processing, predicted to be exported by the Tat system. The position of the signal peptide cleavage has not been experimentally proven.

The protein localises to the periplasm. It carries out the reaction 2 Fe(II)-[cytochrome] + nitrate + 2 H(+) = 2 Fe(III)-[cytochrome] + nitrite + H2O. Its function is as follows. Catalytic subunit of the periplasmic nitrate reductase complex NapAB. Receives electrons from NapB and catalyzes the reduction of nitrate to nitrite. The chain is Periplasmic nitrate reductase from Vibrio parahaemolyticus serotype O3:K6 (strain RIMD 2210633).